The primary structure comprises 293 residues: Eukaryotic translation initiation factor 3 subunit F (293 aa).

The residue at position 2 (A2) is an N-acetylalanine. The 132-residue stretch at 28 to 159 (ARIHPLVIFN…IKAFVSSNLS (132 aa)) folds into the MPN domain.

Belongs to the eIF-3 subunit F family. In terms of assembly, component of the eukaryotic translation initiation factor 3 (eIF-3) complex. Binds to TIF3E1 and TIF3H1. In terms of tissue distribution, expressed in inflorescences, leaves, stems, siliques, roots and seedlings. Accumulates at highly levels in pollen grains, developing embryos and root tips.

The protein localises to the cytoplasm. Component of the eukaryotic translation initiation factor 3 (eIF-3) complex, which is involved in protein synthesis of a specialized repertoire of mRNAs and, together with other initiation factors, stimulates binding of mRNA and methionyl-tRNAi to the 40S ribosome. The eIF-3 complex specifically targets and initiates translation of a subset of mRNAs involved in cell proliferation (Potential). Involved in cell growth and differentiation, especially during embryogenesis and male gametophyte germination. Regulates sensitivity to sugars (e.g. sucrose). This chain is Eukaryotic translation initiation factor 3 subunit F (TIF3F1), found in Arabidopsis thaliana (Mouse-ear cress).